The following is a 604-amino-acid chain: MCGIVGVVGNRNATDILMQGLEKLEYRGYDSAGIYVINQPENGRLIKSVGRIADLRAKIGIDVAGSTGIGHTRWATHGQATEENAHPHASATGRLVLVHNGVIENYLQIKENYLAGHNLKGETDTEIAVHLIGQFVTDGLSVLESFKKALHIIEGSYAFALIDSQNPDIIYVAKNKSPLLIGLGEGYNMVCSDAMAMIRETNQFMEIHDKELVVLTKDTAQVSDYDGNPVERQAYTAELDLSDIGKGTYPYYMLKEIDEQPTVMRKLISTYANENGKLTVDPAIVKSVQEADRIYILAAGTSYNAGFASKSMIETLTDTPVELGIASEWGYNMPLLSKKPMFILLSQSGETADSRQVLVKANAMGVPSLTITNVPGSTLSREATYTMLLHAGPEIAVASTKAYTAQIAALAFLSKAVGEANGKKEALEFDLVHELSIVAQSIEASLSEREVIEKKVANLLATSRNAFYIGRGNDYYVAMEASLKLKEISYIQCEGFAAGELKHGTISLIEEGTPVLALISSSETVAAHTRGNIQEVAARGANVLTVVEEGLNKEEDDVVVNQVHPYLSSISMVIPTQLIAYYASLQRGLDVDKPRNLAKAVTVE.

The active-site Nucleophile; for GATase activity is cysteine 2. A Glutamine amidotransferase type-2 domain is found at 2 to 218 (CGIVGVVGNR…DKELVVLTKD (217 aa)). 2 SIS domains span residues 284-423 (IVKS…ANGK) and 456-594 (VANL…VDKP). Catalysis depends on lysine 599, which acts as the For Fru-6P isomerization activity.

In terms of assembly, homodimer.

The protein localises to the cytoplasm. The enzyme catalyses D-fructose 6-phosphate + L-glutamine = D-glucosamine 6-phosphate + L-glutamate. In terms of biological role, catalyzes the first step in hexosamine metabolism, converting fructose-6P into glucosamine-6P using glutamine as a nitrogen source. This chain is Glutamine--fructose-6-phosphate aminotransferase [isomerizing], found in Streptococcus mutans serotype c (strain ATCC 700610 / UA159).